The primary structure comprises 493 residues: Cobyric acid synthase (493 aa).

The GATase cobBQ-type domain maps to 246–440 (PIDIAVIKMP…IHGVFDGVSF (195 aa)). The active-site Nucleophile is cysteine 326. Histidine 432 is a catalytic residue.

Belongs to the CobB/CobQ family. CobQ subfamily.

It participates in cofactor biosynthesis; adenosylcobalamin biosynthesis. Catalyzes amidations at positions B, D, E, and G on adenosylcobyrinic A,C-diamide. NH(2) groups are provided by glutamine, and one molecule of ATP is hydrogenolyzed for each amidation. The protein is Cobyric acid synthase of Clostridium botulinum (strain Langeland / NCTC 10281 / Type F).